We begin with the raw amino-acid sequence, 582 residues long: DBIRD complex subunit ZNF326 (582 aa).

A mediates transcriptional activation region spans residues 1-124; it reads MDFEDDYTHS…YRNSLDSFGG (124 aa). Phosphoserine is present on residues serine 48, serine 56, serine 63, serine 69, serine 81, serine 82, serine 91, serine 106, serine 114, serine 118, serine 121, and serine 137. Lysine 140 is covalently cross-linked (Glycyl lysine isopeptide (Lys-Gly) (interchain with G-Cter in SUMO2)). The segment at 154–194 is disordered; the sequence is YSSYSSFSSPHMKPAPVGSRGRGTPAYPESTFGSRNYDAFG. Arginine 173 bears the Omega-N-methylarginine mark. A Phosphoserine modification is found at serine 212. At arginine 235 the chain carries Omega-N-methylarginine. Residues 238–260 carry the Bipartite nuclear localization signal motif; that stretch reads KRKMMQPFNKPSGTFIKKPKLAK. Residue lysine 240 forms a Glycyl lysine isopeptide (Lys-Gly) (interchain with G-Cter in SUMO2) linkage. The disordered stretch occupies residues 243–302; it reads QPFNKPSGTFIKKPKLAKPMEKISLSKSPTKTDPKNEEEEKRRIEARREKQRRRREKNSE. An N6-acetyllysine; alternate modification is found at lysine 247. Residue lysine 247 forms a Glycyl lysine isopeptide (Lys-Gly) (interchain with G-Cter in SUMO2); alternate linkage. Residue serine 249 is modified to Phosphoserine. Threonine 251 is modified (phosphothreonine). Glycyl lysine isopeptide (Lys-Gly) (interchain with G-Cter in SUMO2) cross-links involve residues lysine 254 and lysine 264. Serine 270 bears the Phosphoserine mark. The span at 272-290 shows a compositional bias: basic and acidic residues; it reads TKTDPKNEEEEKRRIEARR. The C2H2 AKAP95-type 1 zinc-finger motif lies at 314–336; sequence CSFCKFRTFEEKDIELHLESSSH. Residue lysine 401 forms a Glycyl lysine isopeptide (Lys-Gly) (interchain with G-Cter in SUMO2) linkage. Residues 407–430 form a C2H2 AKAP95-type 2 zinc finger; sequence CSACSVYIPALHSSVQQHLKSPDH. Glycyl lysine isopeptide (Lys-Gly) (interchain with G-Cter in SUMO2) cross-links involve residues lysine 459 and lysine 467. The disordered stretch occupies residues 472 to 582; it reads FEIQDHSQDQ…DFPVEQPEEN (111 aa). A compositionally biased stretch (acidic residues) spans 483–523; the sequence is IEGDEEDEEKIDEPIEEEEDEDEEEEAEEVGEVEEVEEVEE. Positions 530–545 are enriched in gly residues; sequence EGEGNIQGVGEGGEVG. Residues 552–567 are compositionally biased toward acidic residues; the sequence is GVGEVEEVEELEEETA.

This sequence belongs to the AKAP95 family. Component of the DBIRD complex. Interacts with CCAR2; the interaction is direct.

It is found in the nucleus matrix. In terms of biological role, core component of the DBIRD complex, a multiprotein complex that acts at the interface between core mRNP particles and RNA polymerase II (RNAPII) and integrates transcript elongation with the regulation of alternative splicing: the DBIRD complex affects local transcript elongation rates and alternative splicing of a large set of exons embedded in (A + T)-rich DNA regions. May play a role in neuronal differentiation and is able to bind DNA and activate expression in vitro. This is DBIRD complex subunit ZNF326 (ZNF326) from Homo sapiens (Human).